Reading from the N-terminus, the 287-residue chain is uncharacterized protein (287 aa).

Residues 43-50, 90-93, and 156-159 contribute to the GTP site; these read GKTGVGKS, DLPG, and DKAE. A G domain is found at 48–138; the sequence is GKSSLCNALF…LTVDEHFYHQ (91 aa).

This sequence to E.coli YfjP and YeeP.

This is an uncharacterized protein from Escherichia coli (strain K12).